An 867-amino-acid polypeptide reads, in one-letter code: Pentatricopeptide repeat-containing protein At2g39230, mitochondrial (867 aa).

The N-terminal 49 residues, 1 to 49 (MTTFMVSKRFRPPIFLHRFINPKPISSQTRFLHPPDNQSRDISDSTTET), are a transit peptide targeting the mitochondrion. Positions 27–74 (SQTRFLHPPDNQSRDISDSTTETISTLEFPHKTSVPNHSPLTSTSETE) are disordered. The segment covering 60-72 (SVPNHSPLTSTSE) has biased composition (polar residues). PPR repeat units lie at residues 168 to 202 (TPRA…KVVP), 203 to 237 (FVPY…GVAG), 238 to 272 (DNVT…GAEP), 273 to 307 (DGLL…LGVP), 309 to 343 (SQET…GIPM), 344 to 378 (SVIA…GLAP), 379 to 413 (DKVM…RIAP), 414 to 444 (SSVL…SFES), 448 to 482 (HGFM…GIEP), 483 to 517 (NVVF…GLEP), 518 to 552 (NNFT…NFEA), 553 to 588 (NEVI…RYSM), 589 to 623 (SCTS…GKSP), 624 to 658 (NVVT…ELKL), 659 to 693 (DLPA…GLMP), 694 to 728 (NVSV…GISC), 729 to 763 (DLFT…GIVP), 764 to 798 (DEIL…DVTP), and 799 to 833 (NVLL…GIVH).

Belongs to the PPR family. P subfamily. Expressed in lateral organ junctions and shoot apical meristem (SAM).

It is found in the mitochondrion. Its function is as follows. Involved in lateral organ development and boundary demarcation. The sequence is that of Pentatricopeptide repeat-containing protein At2g39230, mitochondrial (LOJ) from Arabidopsis thaliana (Mouse-ear cress).